The sequence spans 415 residues: Leucine-rich repeat-containing protein 34 (415 aa).

LRR repeat units lie at residues 246-272 (TLRYLDVSCNKITRDGMVFLADVLKSN) and 274-296 (TLEVLDLSFNRIENAGAKYLSET).

As to quaternary structure, interacts with NPM1 and NCL.

The protein resides in the nucleus. Its subcellular location is the nucleolus. The protein localises to the cytoplasm. In terms of biological role, highly expressed in stem cells where it may be involved in regulation of pluripotency. In embryonic stem cells (ESCs), important for normal expression of the pluripotency regulators POU5F1/OCT4 and KLF4. Also important for expression of the ectodermal marker gene NES and the endodermal marker gene GATA4. Promotes stem cell proliferation in vitro. The chain is Leucine-rich repeat-containing protein 34 (Lrrc34) from Rattus norvegicus (Rat).